The primary structure comprises 430 residues: S-adenosylmethionine synthase (430 aa).

H14 is an ATP binding site. Position 16 (D16) interacts with Mg(2+). E42 contacts K(+). L-methionine-binding residues include E55 and Q98. The tract at residues 98–108 (QSPDINRGVER) is flexible loop. ATP is bound by residues 164-166 (DAK), 254-255 (KF), D263, 269-270 (RK), A286, and K290. Residue D263 participates in L-methionine binding. K294 lines the L-methionine pocket.

This sequence belongs to the AdoMet synthase family. As to quaternary structure, homotetramer; dimer of dimers. Mg(2+) serves as cofactor. Requires K(+) as cofactor.

Its subcellular location is the cytoplasm. It catalyses the reaction L-methionine + ATP + H2O = S-adenosyl-L-methionine + phosphate + diphosphate. It functions in the pathway amino-acid biosynthesis; S-adenosyl-L-methionine biosynthesis; S-adenosyl-L-methionine from L-methionine: step 1/1. Functionally, catalyzes the formation of S-adenosylmethionine (AdoMet) from methionine and ATP. The overall synthetic reaction is composed of two sequential steps, AdoMet formation and the subsequent tripolyphosphate hydrolysis which occurs prior to release of AdoMet from the enzyme. This Bacteroides thetaiotaomicron (strain ATCC 29148 / DSM 2079 / JCM 5827 / CCUG 10774 / NCTC 10582 / VPI-5482 / E50) protein is S-adenosylmethionine synthase.